The following is a 442-amino-acid chain: Putative toxin YopC (442 aa).

It in the C-terminal section; belongs to the MbcT/ParT/Res family. In terms of assembly, forms a complex with cognate antitoxin YopB.

Its function is as follows. May be the toxic component of a type II toxin-antitoxin (TA) system. Neutralized by its cognate antitoxin YopB. In Bacillus subtilis (strain 168), this protein is Putative toxin YopC (yopC).